A 62-amino-acid chain; its full sequence is Conotoxin Pl168 (62 aa).

Residues Met1 to Ser21 form the signal peptide. Residues Phe22–Arg40 constitute a propeptide that is removed on maturation. 2 disulfide bridges follow: Cys46/Cys52 and Cys47/Cys61.

The protein belongs to the conotoxin A superfamily. Post-translationally, both Pro-53 and Pro-62 are not in cis/trans isomerization. In terms of tissue distribution, expressed by the venom duct.

Its subcellular location is the secreted. Its function is as follows. Probable neurotoxin with unknown target. Possibly targets ion channels. This is Conotoxin Pl168 from Conus planorbis (Planorbis cone).